We begin with the raw amino-acid sequence, 249 residues long: Enolase-phosphatase E1 (249 aa).

Mg(2+) is bound by residues Asp14 and Glu16. Substrate is bound by residues 141–142 and Lys175; that span reads SS. A Mg(2+)-binding site is contributed by Asp200.

Belongs to the HAD-like hydrolase superfamily. MasA/MtnC family. Monomer. It depends on Mg(2+) as a cofactor.

It localises to the cytoplasm. It is found in the nucleus. It catalyses the reaction 5-methylsulfanyl-2,3-dioxopentyl phosphate + H2O = 1,2-dihydroxy-5-(methylsulfanyl)pent-1-en-3-one + phosphate. Its pathway is amino-acid biosynthesis; L-methionine biosynthesis via salvage pathway; L-methionine from S-methyl-5-thio-alpha-D-ribose 1-phosphate: step 3/6. It participates in amino-acid biosynthesis; L-methionine biosynthesis via salvage pathway; L-methionine from S-methyl-5-thio-alpha-D-ribose 1-phosphate: step 4/6. Its function is as follows. Bifunctional enzyme that catalyzes the enolization of 2,3-diketo-5-methylthiopentyl-1-phosphate (DK-MTP-1-P) into the intermediate 2-hydroxy-3-keto-5-methylthiopentenyl-1-phosphate (HK-MTPenyl-1-P), which is then dephosphorylated to form the acireductone 1,2-dihydroxy-3-keto-5-methylthiopentene (DHK-MTPene). This is Enolase-phosphatase E1 from Drosophila virilis (Fruit fly).